The following is a 169-amino-acid chain: uncharacterized protein (169 aa).

Helical transmembrane passes span 10–30 and 149–169; these read NVHM…FKLI and IPLA…LLIP.

The protein localises to the membrane. This is an uncharacterized protein from Dictyostelium discoideum (Social amoeba).